A 364-amino-acid polypeptide reads, in one-letter code: Mannose-1-phosphate guanyltransferase (364 aa).

Belongs to the transferase hexapeptide repeat family.

Its subcellular location is the cytoplasm. It catalyses the reaction alpha-D-mannose 1-phosphate + GTP + H(+) = GDP-alpha-D-mannose + diphosphate. Its pathway is nucleotide-sugar biosynthesis; GDP-alpha-D-mannose biosynthesis; GDP-alpha-D-mannose from alpha-D-mannose 1-phosphate (GTP route): step 1/1. In terms of biological role, involved in cell wall synthesis where it is required for glycosylation. Involved in cell cycle progression through cell-size checkpoint. In Emericella nidulans (strain FGSC A4 / ATCC 38163 / CBS 112.46 / NRRL 194 / M139) (Aspergillus nidulans), this protein is Mannose-1-phosphate guanyltransferase (mpg1).